Consider the following 49-residue polypeptide: Large ribosomal subunit protein eL40 (49 aa).

This sequence belongs to the eukaryotic ribosomal protein eL40 family.

The chain is Large ribosomal subunit protein eL40 from Haloquadratum walsbyi (strain DSM 16790 / HBSQ001).